The following is an 83-amino-acid chain: Cytochrome b559 subunit alpha (83 aa).

Residues 22–36 traverse the membrane as a helical segment; sequence VIHSITIPALFIAGW. His24 contacts heme.

This sequence belongs to the PsbE/PsbF family. Heterodimer of an alpha subunit and a beta subunit. PSII is composed of 1 copy each of membrane proteins PsbA, PsbB, PsbC, PsbD, PsbE, PsbF, PsbH, PsbI, PsbJ, PsbK, PsbL, PsbM, PsbT, PsbX, PsbY, PsbZ, Psb30/Ycf12, peripheral proteins PsbO, CyanoQ (PsbQ), PsbU, PsbV and a large number of cofactors. It forms dimeric complexes. Heme b serves as cofactor.

Its subcellular location is the cellular thylakoid membrane. This b-type cytochrome is tightly associated with the reaction center of photosystem II (PSII). PSII is a light-driven water:plastoquinone oxidoreductase that uses light energy to abstract electrons from H(2)O, generating O(2) and a proton gradient subsequently used for ATP formation. It consists of a core antenna complex that captures photons, and an electron transfer chain that converts photonic excitation into a charge separation. In Synechococcus elongatus (strain ATCC 33912 / PCC 7942 / FACHB-805) (Anacystis nidulans R2), this protein is Cytochrome b559 subunit alpha.